A 305-amino-acid polypeptide reads, in one-letter code: Probable 2-methylisocitrate lyase 1 (305 aa).

52-54 lines the substrate pocket; the sequence is SGA. Mg(2+) is bound by residues Asp-91 and Asp-93. Residues 128-129, Arg-163, Glu-193, 216-218, Arg-247, and Arg-276 contribute to the substrate site; these read CG and NMT.

Belongs to the isocitrate lyase/PEP mutase superfamily. Methylisocitrate lyase family. In terms of assembly, homotetramer; dimer of dimers. The cofactor is Mg(2+).

It catalyses the reaction (2S,3R)-3-hydroxybutane-1,2,3-tricarboxylate = pyruvate + succinate. In terms of biological role, catalyzes the thermodynamically favored C-C bond cleavage of (2R,3S)-2-methylisocitrate to yield pyruvate and succinate via an alpha-carboxy-carbanion intermediate. The chain is Probable 2-methylisocitrate lyase 1 from Corynebacterium glutamicum (strain ATCC 13032 / DSM 20300 / JCM 1318 / BCRC 11384 / CCUG 27702 / LMG 3730 / NBRC 12168 / NCIMB 10025 / NRRL B-2784 / 534).